Consider the following 326-residue polypeptide: MTDASSLPLYPHRHLLGISDLSPADIELLLDRADRAVAISRQSEKKTSTLRGRTQINLFYEASTRTQSSFELAGKRLGADVMNMSVASSSVKKGETLIDTAMTLNAMRPDILIIRHQSAGAAALLAQKVGCSVVNAGDGAHEHPTQALLDALTIRRAKGPLSKLIVAICGDILHSRVARSNIMLLNALGAQVRVVAPSTLLPSGIEKMGVIVTRSMAEGLKDADVVMMLRLQRERMEGAFVPSVREYFRYFGLDAEKLKAAKGDALVMHPGPMNRGVEIASEIADGPQSVIQEQVEMGVAVRMAVMEALLDPRRNQEGRKQEGRGA.

Carbamoyl phosphate-binding residues include arginine 65 and threonine 66. Lysine 93 is an L-aspartate binding site. Residues arginine 115, histidine 143, and glutamine 146 each contribute to the carbamoyl phosphate site. Residues arginine 176 and arginine 230 each coordinate L-aspartate. Carbamoyl phosphate is bound by residues glycine 271 and proline 272.

The protein belongs to the aspartate/ornithine carbamoyltransferase superfamily. ATCase family. Heterododecamer (2C3:3R2) of six catalytic PyrB chains organized as two trimers (C3), and six regulatory PyrI chains organized as three dimers (R2).

The enzyme catalyses carbamoyl phosphate + L-aspartate = N-carbamoyl-L-aspartate + phosphate + H(+). Its pathway is pyrimidine metabolism; UMP biosynthesis via de novo pathway; (S)-dihydroorotate from bicarbonate: step 2/3. Its function is as follows. Catalyzes the condensation of carbamoyl phosphate and aspartate to form carbamoyl aspartate and inorganic phosphate, the committed step in the de novo pyrimidine nucleotide biosynthesis pathway. The sequence is that of Aspartate carbamoyltransferase catalytic subunit from Mesorhizobium japonicum (strain LMG 29417 / CECT 9101 / MAFF 303099) (Mesorhizobium loti (strain MAFF 303099)).